A 392-amino-acid chain; its full sequence is Spermatogenesis associated 6-like protein (392 aa).

Ser-260 and Ser-263 each carry phosphoserine. Residues 286-301 show a composition bias toward low complexity; the sequence is SCLDSSQFGKSSSSKQ. The disordered stretch occupies residues 286 to 305; sequence SCLDSSQFGKSSSSKQGDAD.

Belongs to the SPATA6 family.

This Homo sapiens (Human) protein is Spermatogenesis associated 6-like protein (SPATA6L).